We begin with the raw amino-acid sequence, 79 residues long: Centromere protein X (79 aa).

An N-acetylmethionine modification is found at Met1.

Belongs to the CENP-X/MHF2 family. In terms of assembly, heterodimer with CENPX, sometimes called MHF; this interaction stabilizes both partners. MHF heterodimers can assemble to form tetrameric structures. MHF also coassemble with CENPT-CENPW heterodimers at centromeres to form the tetrameric CENP-T-W-S-X complex. Forms a discrete complex with FANCM and CENPX, called FANCM-MHF; this interaction, probably mediated by direct binding between CENPS and FANCM, leads to synergistic activation of double-stranded DNA binding and strongly stimulates FANCM-mediated DNA remodeling. Recruited by FANCM to the Fanconi anemia (FA) core complex, which consists of CENPS, CENPX, FANCA, FANCB, FANCC, FANCE, FANCF, FANCG, FANCL, FANCM, FAAP24 and FAAP100. The FA core complex associates with Bloom syndrome (BLM) complex, which consists of at least BLM, DNA topoisomerase 3-alpha (TOP3A), RMI1/BLAP75, RPA1/RPA70 and RPA2/RPA32. The super complex between FA and BLM is called BRAFT.

Its subcellular location is the nucleus. The protein localises to the chromosome. It is found in the centromere. The protein resides in the kinetochore. Its function is as follows. DNA-binding component of the Fanconi anemia (FA) core complex. Required for the normal activation of the FA pathway, leading to monoubiquitination of the FANCI-FANCD2 complex in response to DNA damage, cellular resistance to DNA cross-linking drugs, and prevention of chromosomal breakage. In complex with CENPS (MHF heterodimer), crucial cofactor for FANCM in both binding and ATP-dependent remodeling of DNA. Stabilizes FANCM. In complex with CENPS and FANCM (but not other FANC proteins), rapidly recruited to blocked forks and promotes gene conversion at blocked replication forks. In complex with CENPS, CENPT and CENPW (CENP-T-W-S-X heterotetramer), involved in the formation of a functional kinetochore outer plate, which is essential for kinetochore-microtubule attachment and faithful mitotic progression. As a component of MHF and CENP-T-W-S-X complexes, binds DNA and bends it to form a nucleosome-like structure. DNA-binding function is fulfilled in the presence of CENPS, with the following preference for DNA substates: Holliday junction &gt; double-stranded &gt; splay arm &gt; single-stranded. Does not bind DNA on its own. This Bos taurus (Bovine) protein is Centromere protein X (CENPX).